Reading from the N-terminus, the 325-residue chain is Transaldolase (325 aa).

Lysine 125 serves as the catalytic Schiff-base intermediate with substrate.

This sequence belongs to the transaldolase family. Type 2 subfamily.

The protein resides in the cytoplasm. It carries out the reaction D-sedoheptulose 7-phosphate + D-glyceraldehyde 3-phosphate = D-erythrose 4-phosphate + beta-D-fructose 6-phosphate. It functions in the pathway carbohydrate degradation; pentose phosphate pathway; D-glyceraldehyde 3-phosphate and beta-D-fructose 6-phosphate from D-ribose 5-phosphate and D-xylulose 5-phosphate (non-oxidative stage): step 2/3. Its function is as follows. Transaldolase is important for the balance of metabolites in the pentose-phosphate pathway. This chain is Transaldolase (tal), found in Campylobacter jejuni subsp. jejuni serotype O:2 (strain ATCC 700819 / NCTC 11168).